The sequence spans 104 residues: Large ribosomal subunit protein uL24 (104 aa).

Belongs to the universal ribosomal protein uL24 family. In terms of assembly, part of the 50S ribosomal subunit.

One of two assembly initiator proteins, it binds directly to the 5'-end of the 23S rRNA, where it nucleates assembly of the 50S subunit. In terms of biological role, one of the proteins that surrounds the polypeptide exit tunnel on the outside of the subunit. The sequence is that of Large ribosomal subunit protein uL24 from Colwellia psychrerythraea (strain 34H / ATCC BAA-681) (Vibrio psychroerythus).